The sequence spans 250 residues: Ubiquinone/menaquinone biosynthesis C-methyltransferase UbiE (250 aa).

S-adenosyl-L-methionine-binding positions include threonine 74, aspartate 94, 122-123 (DA), and serine 139.

This sequence belongs to the class I-like SAM-binding methyltransferase superfamily. MenG/UbiE family.

The enzyme catalyses a 2-demethylmenaquinol + S-adenosyl-L-methionine = a menaquinol + S-adenosyl-L-homocysteine + H(+). It catalyses the reaction a 2-methoxy-6-(all-trans-polyprenyl)benzene-1,4-diol + S-adenosyl-L-methionine = a 5-methoxy-2-methyl-3-(all-trans-polyprenyl)benzene-1,4-diol + S-adenosyl-L-homocysteine + H(+). It participates in quinol/quinone metabolism; menaquinone biosynthesis; menaquinol from 1,4-dihydroxy-2-naphthoate: step 2/2. It functions in the pathway cofactor biosynthesis; ubiquinone biosynthesis. Functionally, methyltransferase required for the conversion of demethylmenaquinol (DMKH2) to menaquinol (MKH2) and the conversion of 2-polyprenyl-6-methoxy-1,4-benzoquinol (DDMQH2) to 2-polyprenyl-3-methyl-6-methoxy-1,4-benzoquinol (DMQH2). The sequence is that of Ubiquinone/menaquinone biosynthesis C-methyltransferase UbiE from Roseobacter denitrificans (strain ATCC 33942 / OCh 114) (Erythrobacter sp. (strain OCh 114)).